Reading from the N-terminus, the 349-residue chain is MSSLSGKVQTVLGLVEPSKLGRTLTHEHLAMTFDCCYCPPPPCQEAISKEPIVMKNLYWIQKNAYSHKENLQLNQETEAIKEELLYFKANGGGALVENTTTGISRDTQTLKRLAEETGVHIISGAGFYVDATHSSETRAMSVEQLTDVLMNEILHGADGTSIKCGIIGEIGCSWPLTESERKVLQATAHAQAQLGCPVIIHPGRSSRAPFQIIRILQEAGADISKTVMSHLDRTILDKKELLEFAQLGCYLEYDLFGTELLHYQLGPDIDMPDDNKRIRRVRLLVEEGCEDRILVAHDIHTKTRLMKYGGHGYSHILTNVVPKMLLRGITENVLDKILIENPKQWLTFK.

Residues histidine 26, histidine 28, glutamate 169, histidine 201, histidine 230, and aspartate 298 each coordinate a divalent metal cation.

Belongs to the metallo-dependent hydrolases superfamily. Phosphotriesterase family. It depends on a divalent metal cation as a cofactor.

It is found in the cytoplasm. Its subcellular location is the cytosol. The catalysed reaction is N-acetyltaurine + H2O = taurine + acetate. It carries out the reaction N-propanoyltaurine + H2O = propanoate + taurine. It catalyses the reaction N-acetyl-L-methionine + H2O = L-methionine + acetate. The enzyme catalyses N-acetyl-L-isoleucine + H2O = L-isoleucine + acetate. The catalysed reaction is N-acetyl-L-leucine + H2O = L-leucine + acetate. It carries out the reaction N-acetyl-L-valine + H2O = L-valine + acetate. Functionally, N-acetyltaurine hydrolase that regulates feeding by catalyzing the hydrolysis of N-acetyltaurine into taurine and acetate. N-acetyltaurine has anorexigenic and anti-obesity effects that are dependent on GFRAL receptor and GDF15. PTER also acts on other N-acetyl amino acids (Met, Ile, Leu, Val) and N-propionyltaurine, but at lower rates. This Homo sapiens (Human) protein is N-acetyltaurine hydrolase.